We begin with the raw amino-acid sequence, 207 residues long: Large ribosomal subunit protein uL4 (207 aa).

The tract at residues 52-77 (RGWADVSGGGRKPWRQKGTGRARAGS) is disordered.

Belongs to the universal ribosomal protein uL4 family. Part of the 50S ribosomal subunit.

Functionally, one of the primary rRNA binding proteins, this protein initially binds near the 5'-end of the 23S rRNA. It is important during the early stages of 50S assembly. It makes multiple contacts with different domains of the 23S rRNA in the assembled 50S subunit and ribosome. Its function is as follows. Forms part of the polypeptide exit tunnel. This Moorella thermoacetica (strain ATCC 39073 / JCM 9320) protein is Large ribosomal subunit protein uL4.